Here is a 280-residue protein sequence, read N- to C-terminus: Putative transcription factor kapC (280 aa).

The tract at residues 1 to 102 (MQPALAPHPS…GKRPLSTSKR (102 aa)) is disordered. Positions 39-49 (PQPPAPQPPHM) are enriched in pro residues. Residues 79-89 (TQPDVTGQETP) show a composition bias toward polar residues. The region spanning 96–159 (PLSTSKRAAQ…EYIINLQSRL (64 aa)) is the bZIP domain. A basic motif region spans residues 97–120 (LSTSKRAAQNRAAQRAFRQRKEAH). The segment at 124–155 (LEGKVKAYESMGEAIKALQAENYQLREYIINL) is leucine-zipper. The segment at 169–280 (LPGNIDLSQP…EQTHGLPLIS (112 aa)) is disordered. The segment covering 197 to 206 (APPPTAPQQP) has biased composition (pro residues).

It belongs to the bZIP family.

Its subcellular location is the nucleus. Putative transcription factor. The protein is Putative transcription factor kapC (kapC) of Aspergillus fumigatus (strain ATCC MYA-4609 / CBS 101355 / FGSC A1100 / Af293) (Neosartorya fumigata).